A 235-amino-acid chain; its full sequence is Ubiquinone/menaquinone biosynthesis C-methyltransferase UbiE (235 aa).

Residues threonine 60 and aspartate 81 each contribute to the S-adenosyl-L-methionine site.

Belongs to the class I-like SAM-binding methyltransferase superfamily. MenG/UbiE family.

The catalysed reaction is a 2-demethylmenaquinol + S-adenosyl-L-methionine = a menaquinol + S-adenosyl-L-homocysteine + H(+). It catalyses the reaction a 2-methoxy-6-(all-trans-polyprenyl)benzene-1,4-diol + S-adenosyl-L-methionine = a 5-methoxy-2-methyl-3-(all-trans-polyprenyl)benzene-1,4-diol + S-adenosyl-L-homocysteine + H(+). The protein operates within quinol/quinone metabolism; menaquinone biosynthesis; menaquinol from 1,4-dihydroxy-2-naphthoate: step 2/2. It functions in the pathway cofactor biosynthesis; ubiquinone biosynthesis. Functionally, methyltransferase required for the conversion of demethylmenaquinol (DMKH2) to menaquinol (MKH2) and the conversion of 2-polyprenyl-6-methoxy-1,4-benzoquinol (DDMQH2) to 2-polyprenyl-3-methyl-6-methoxy-1,4-benzoquinol (DMQH2). This chain is Ubiquinone/menaquinone biosynthesis C-methyltransferase UbiE, found in Geotalea uraniireducens (strain Rf4) (Geobacter uraniireducens).